The chain runs to 508 residues: Chromosomal replication initiator protein DnaA (508 aa).

Residues 1–90 (MSVELWQQCV…RRSSAPRAAP (90 aa)) form a domain I, interacts with DnaA modulators region. A domain II region spans residues 91–171 (NAPVSAAVAA…QVEGALKHTS (81 aa)). The segment at 130-160 (EVEEPSSRDSFDSMSDSGSVPAASGRTEQRT) is disordered. The segment at 172–388 (YLNRTFTFET…GALKRVIAHS (217 aa)) is domain III, AAA+ region. Residues G216, G218, K219, and T220 each contribute to the ATP site. The tract at residues 389–508 (HFMGRDITIE…YKNLLRTLTT (120 aa)) is domain IV, binds dsDNA.

The protein belongs to the DnaA family. Oligomerizes as a right-handed, spiral filament on DNA at oriC.

Its subcellular location is the cytoplasm. In terms of biological role, plays an essential role in the initiation and regulation of chromosomal replication. ATP-DnaA binds to the origin of replication (oriC) to initiate formation of the DNA replication initiation complex once per cell cycle. Binds the DnaA box (a 9 base pair repeat at the origin) and separates the double-stranded (ds)DNA. Forms a right-handed helical filament on oriC DNA; dsDNA binds to the exterior of the filament while single-stranded (ss)DNA is stabiized in the filament's interior. The ATP-DnaA-oriC complex binds and stabilizes one strand of the AT-rich DNA unwinding element (DUE), permitting loading of DNA polymerase. After initiation quickly degrades to an ADP-DnaA complex that is not apt for DNA replication. Binds acidic phospholipids. This chain is Chromosomal replication initiator protein DnaA, found in Pseudomonas entomophila (strain L48).